We begin with the raw amino-acid sequence, 284 residues long: MFIISSKNMLQKAQHAGYAVPAFNIHNLETLQVVVETAAEMRSPLIVAGTPGTFSYAGMGNIVAIAGDLAREYNLPLAIHLDHHESLADIESKVMAGIRSVMIDGSHFPFEENVALVKSVVDFCHRYDTSVEAELGRLGGIEDDLVVDSKDALYTNPQQAREFVARTGIDSLAVAIGTAHCMYAAEPKLDFERLAEIRALVDIPLVLHGASGLPESDIRQAISLGVCKVNVATELKIAFSDALKEYFLQNPKANDPRHYMQPAKQAMKEVVRKVIHVCGCEGQL.

The active-site Proton donor is D82. Residues H83 and H180 each contribute to the Zn(2+) site. C181 lines the dihydroxyacetone phosphate pocket. H208 contributes to the Zn(2+) binding site. Residues 209–211 (GAS) and 230–233 (NVAT) contribute to the dihydroxyacetone phosphate site.

This sequence belongs to the class II fructose-bisphosphate aldolase family. TagBP aldolase GatY subfamily. In terms of assembly, forms a complex with GatZ. It depends on Zn(2+) as a cofactor.

The enzyme catalyses D-tagatofuranose 1,6-bisphosphate = D-glyceraldehyde 3-phosphate + dihydroxyacetone phosphate. The protein operates within carbohydrate metabolism; D-tagatose 6-phosphate degradation; D-glyceraldehyde 3-phosphate and glycerone phosphate from D-tagatose 6-phosphate: step 2/2. Its function is as follows. Catalytic subunit of the tagatose-1,6-bisphosphate aldolase GatYZ, which catalyzes the reversible aldol condensation of dihydroxyacetone phosphate (DHAP or glycerone-phosphate) with glyceraldehyde 3-phosphate (G3P) to produce tagatose 1,6-bisphosphate (TBP). Requires GatZ subunit for full activity and stability. Is involved in the catabolism of galactitol. This chain is D-tagatose-1,6-bisphosphate aldolase subunit GatY, found in Salmonella paratyphi A (strain ATCC 9150 / SARB42).